We begin with the raw amino-acid sequence, 955 residues long: Anoctamin-4 (955 aa).

Residues 1–352 (MEASSSGITN…FGEKIGLYFA (352 aa)) lie on the Cytoplasmic side of the membrane. Residues 73 to 97 (KDDDSLLHPGNLTSTSEDTSRLEAG) are disordered. Residues 353–373 (WLGWYTGMLFPAAFIGLFVFL) traverse the membrane as a helical segment. Over 374-424 (YGVTTLDHCQVSKEVCQATDIIMCPVCDKYCPFMRLSDSCVYAKVTHLFDN) the chain is Extracellular. A helical transmembrane segment spans residues 425–445 (GATVFFAVFMAVWATVFLEFW). At 446 to 505 (KRRRAVIAYDWDLIDWEEEEEEIRPQFEAKYSKKERMNPISGKPEPYQAFTDKCSRLIVS) the chain is on the cytoplasmic side. A helical transmembrane segment spans residues 506-526 (ASGIFFMICVVIAAVFGIVIY). Residues 527-547 (RVVTVSTFAAFKWALIRNNSQ) lie on the Extracellular side of the membrane. Asn-544 carries N-linked (GlcNAc...) asparagine glycosylation. Residues 548-568 (VATTGTAVCINFCIIMLLNVL) form a helical membrane-spanning segment. Residues 569–595 (YEKVALLLTNLEQPRTESEWENSFTLK) are Cytoplasmic-facing. A helical membrane pass occupies residues 596–616 (MFLFQFVNLNSSTFYIAFFLG). Over 617 to 715 (RFTGHPGAYL…AYGLFDEYLE (99 aa)) the chain is Extracellular. The helical transmembrane segment at 716-736 (MILQFGFTTIFVAAFPLAPLL) threads the bilayer. The Cytoplasmic portion of the chain corresponds to 737 to 768 (ALLNNIIEIRLDAYKFVTQWRRPLASRAKDIG). Residues 769 to 789 (IWYGILEGIGILSVITNAFVI) traverse the membrane as a helical segment. Residues 790-885 (AITSDFIPRL…QFWHVLAARL (96 aa)) are Extracellular-facing. Asn-824 and Asn-837 each carry an N-linked (GlcNAc...) asparagine glycan. The chain crosses the membrane as a helical span at residues 886–906 (AFIIVFEHLVFCIKHLISYLI). Residues 907–955 (PDLPKDLRDRMRREKYLIQEMMYEAELERLQKERKERKKNGKAHHNEWP) are Cytoplasmic-facing.

The protein belongs to the anoctamin family. As to expression, predominantly expressed in neuronal tissues. Expressed at low levels in ovary, uterus, heart and brain.

Its subcellular location is the cell membrane. It carries out the reaction a 1,2-diacyl-sn-glycero-3-phospho-L-serine(in) = a 1,2-diacyl-sn-glycero-3-phospho-L-serine(out). The enzyme catalyses a beta-D-galactosyl-(1&lt;-&gt;1')-N-acylsphing-4-enine(out) = a beta-D-galactosyl-(1&lt;-&gt;1')-N-acylsphing-4-enine(in). It catalyses the reaction a 1,2-diacyl-sn-glycero-3-phosphocholine(in) = a 1,2-diacyl-sn-glycero-3-phosphocholine(out). Its function is as follows. Has calcium-dependent phospholipid scramblase activity; scrambles phosphatidylserine, phosphatidylcholine and galactosylceramide. Does not exhibit calcium-activated chloride channel (CaCC) activity. This is Anoctamin-4 from Mus musculus (Mouse).